The following is a 740-amino-acid chain: Catalase-peroxidase (740 aa).

A disordered region spans residues 1 to 44 (MSDSCPVAHDGNTASTSESENPAIPSPTPTGNRPRTNRDWWPNQ). The tryptophyl-tyrosyl-methioninium (Trp-Tyr) (with M-257) cross-link spans 109 to 231 (WHAAGTYRIA…LGAVQMGLIY (123 aa)). Catalysis depends on H110, which acts as the Proton acceptor. The tryptophyl-tyrosyl-methioninium (Tyr-Met) (with W-109) cross-link spans 231–257 (YVNPEGPNGQPDPVAAARDIRETFARM). H272 serves as a coordination point for heme b.

This sequence belongs to the peroxidase family. Peroxidase/catalase subfamily. In terms of assembly, homodimer or homotetramer. It depends on heme b as a cofactor. Formation of the three residue Trp-Tyr-Met cross-link is important for the catalase, but not the peroxidase activity of the enzyme.

It catalyses the reaction H2O2 + AH2 = A + 2 H2O. It carries out the reaction 2 H2O2 = O2 + 2 H2O. Functionally, bifunctional enzyme with both catalase and broad-spectrum peroxidase activity. This is Catalase-peroxidase from Rhodococcus erythropolis (strain PR4 / NBRC 100887).